Reading from the N-terminus, the 309-residue chain is Porphobilinogen deaminase (309 aa).

An S-(dipyrrolylmethanemethyl)cysteine modification is found at C242.

The protein belongs to the HMBS family. As to quaternary structure, monomer. Dipyrromethane serves as cofactor.

It catalyses the reaction 4 porphobilinogen + H2O = hydroxymethylbilane + 4 NH4(+). It functions in the pathway porphyrin-containing compound metabolism; protoporphyrin-IX biosynthesis; coproporphyrinogen-III from 5-aminolevulinate: step 2/4. In terms of biological role, tetrapolymerization of the monopyrrole PBG into the hydroxymethylbilane pre-uroporphyrinogen in several discrete steps. The chain is Porphobilinogen deaminase from Shewanella sediminis (strain HAW-EB3).